Consider the following 236-residue polypeptide: 1-(5-phosphoribosyl)-5-[(5-phosphoribosylamino)methylideneamino] imidazole-4-carboxamide isomerase (236 aa).

D8 functions as the Proton acceptor in the catalytic mechanism. The active-site Proton donor is D128.

This sequence belongs to the HisA/HisF family.

Its subcellular location is the cytoplasm. It carries out the reaction 1-(5-phospho-beta-D-ribosyl)-5-[(5-phospho-beta-D-ribosylamino)methylideneamino]imidazole-4-carboxamide = 5-[(5-phospho-1-deoxy-D-ribulos-1-ylimino)methylamino]-1-(5-phospho-beta-D-ribosyl)imidazole-4-carboxamide. The protein operates within amino-acid biosynthesis; L-histidine biosynthesis; L-histidine from 5-phospho-alpha-D-ribose 1-diphosphate: step 4/9. This is 1-(5-phosphoribosyl)-5-[(5-phosphoribosylamino)methylideneamino] imidazole-4-carboxamide isomerase from Nitrosopumilus maritimus (strain SCM1).